Reading from the N-terminus, the 86-residue chain is Toxin 3FTx-Dis4 (86 aa).

The first 19 residues, 1 to 19 (MKTLLLSLVMVGFMYLVSG), serve as a signal peptide directing secretion. 3 cysteine pairs are disulfide-bonded: C24–C45, C38–C63, and C79–C84.

Belongs to the three-finger toxin family. Ancestral subfamily. As to expression, expressed by the venom gland.

Its subcellular location is the secreted. This Dispholidus typus (Boomslang) protein is Toxin 3FTx-Dis4.